We begin with the raw amino-acid sequence, 427 residues long: Gamma-glutamyl phosphate reductase (427 aa).

This sequence belongs to the gamma-glutamyl phosphate reductase family.

The protein resides in the cytoplasm. It catalyses the reaction L-glutamate 5-semialdehyde + phosphate + NADP(+) = L-glutamyl 5-phosphate + NADPH + H(+). Its pathway is amino-acid biosynthesis; L-proline biosynthesis; L-glutamate 5-semialdehyde from L-glutamate: step 2/2. Its function is as follows. Catalyzes the NADPH-dependent reduction of L-glutamate 5-phosphate into L-glutamate 5-semialdehyde and phosphate. The product spontaneously undergoes cyclization to form 1-pyrroline-5-carboxylate. The sequence is that of Gamma-glutamyl phosphate reductase from Allorhizobium ampelinum (strain ATCC BAA-846 / DSM 112012 / S4) (Agrobacterium vitis (strain S4)).